Consider the following 123-residue polypeptide: uncharacterized protein (123 aa).

The stretch at 36–76 (VDRQENKKEFLSAEEAREKFKELINQVRSWKEQMSTLSKYA) forms a coiled coil.

This is an uncharacterized protein from Aquifex aeolicus (strain VF5).